We begin with the raw amino-acid sequence, 249 residues long: 2,3-bisphosphoglycerate-dependent phosphoglycerate mutase (249 aa).

Residues 8–15, 21–22, arginine 60, 87–90, lysine 98, 114–115, and 183–184 each bind substrate; these read RHGESIWN, TG, ERHY, RR, and GN. Catalysis depends on histidine 9, which acts as the Tele-phosphohistidine intermediate. Glutamate 87 functions as the Proton donor/acceptor in the catalytic mechanism.

This sequence belongs to the phosphoglycerate mutase family. BPG-dependent PGAM subfamily.

It carries out the reaction (2R)-2-phosphoglycerate = (2R)-3-phosphoglycerate. Its pathway is carbohydrate degradation; glycolysis; pyruvate from D-glyceraldehyde 3-phosphate: step 3/5. Its function is as follows. Catalyzes the interconversion of 2-phosphoglycerate and 3-phosphoglycerate. In Caldanaerobacter subterraneus subsp. tengcongensis (strain DSM 15242 / JCM 11007 / NBRC 100824 / MB4) (Thermoanaerobacter tengcongensis), this protein is 2,3-bisphosphoglycerate-dependent phosphoglycerate mutase.